Consider the following 366-residue polypeptide: Autoinducer 2-binding periplasmic protein LuxP (366 aa).

The N-terminal stretch at 1–13 (MKKILLTCLLASA) is a signal peptide.

Belongs to the bacterial solute-binding protein 2 family.

The protein localises to the periplasm. Its function is as follows. Binds to an autoinducer molecule. This complex then interacts with the LuxQ sensor protein. This Vibrio vulnificus (strain YJ016) protein is Autoinducer 2-binding periplasmic protein LuxP (luxP).